The following is a 313-amino-acid chain: Acetyl-coenzyme A carboxylase carboxyl transferase subunit alpha (313 aa).

In terms of domain architecture, CoA carboxyltransferase C-terminal spans 30 to 291; it reads DLDREISDLE…KMALLQELAF (262 aa).

Belongs to the AccA family. As to quaternary structure, acetyl-CoA carboxylase is a heterohexamer composed of biotin carboxyl carrier protein (AccB), biotin carboxylase (AccC) and two subunits each of ACCase subunit alpha (AccA) and ACCase subunit beta (AccD).

It is found in the cytoplasm. The catalysed reaction is N(6)-carboxybiotinyl-L-lysyl-[protein] + acetyl-CoA = N(6)-biotinyl-L-lysyl-[protein] + malonyl-CoA. Its pathway is lipid metabolism; malonyl-CoA biosynthesis; malonyl-CoA from acetyl-CoA: step 1/1. Its function is as follows. Component of the acetyl coenzyme A carboxylase (ACC) complex. First, biotin carboxylase catalyzes the carboxylation of biotin on its carrier protein (BCCP) and then the CO(2) group is transferred by the carboxyltransferase to acetyl-CoA to form malonyl-CoA. The protein is Acetyl-coenzyme A carboxylase carboxyl transferase subunit alpha of Zymomonas mobilis subsp. mobilis (strain ATCC 31821 / ZM4 / CP4).